The sequence spans 265 residues: Tryptophan synthase alpha chain (265 aa).

Residues Glu49 and Asp60 each act as proton acceptor in the active site.

This sequence belongs to the TrpA family. Tetramer of two alpha and two beta chains.

The enzyme catalyses (1S,2R)-1-C-(indol-3-yl)glycerol 3-phosphate + L-serine = D-glyceraldehyde 3-phosphate + L-tryptophan + H2O. Its pathway is amino-acid biosynthesis; L-tryptophan biosynthesis; L-tryptophan from chorismate: step 5/5. Its function is as follows. The alpha subunit is responsible for the aldol cleavage of indoleglycerol phosphate to indole and glyceraldehyde 3-phosphate. The protein is Tryptophan synthase alpha chain of Ralstonia nicotianae (strain ATCC BAA-1114 / GMI1000) (Ralstonia solanacearum).